The following is an 819-amino-acid chain: Protein kinase C-binding protein NELL2 (819 aa).

A signal peptide spans 1–24 (MHAMESRVLLRTFCVILGLEAVWG). Residues N56, N228, N296, and N301 are each glycosylated (N-linked (GlcNAc...) asparagine). The Laminin G-like domain occupies 58 to 231 (TKAFLFQDSP…AQCPDLNRTC (174 aa)). One can recognise a VWFC 1 domain in the interval 275–334 (RTCTMKGTTYREFESWTDGCKNCTCLNGTIQCETLVCPAPDCPAKSAPAYVDGKCCKECK). An EGF-like 1 domain is found at 400 to 442 (GYDFCSEKHTCMENSVCRNLNDRAVCSCRDGFRALREDNAYCE). Disulfide bonds link C404-C416, C410-C425, and C427-C441. D443, I444, and E446 together coordinate Ca(2+). The EGF-like 2; calcium-binding domain maps to 443-484 (DIDECAEGRHYCRENTMCVNTPGSFLCICQTGYIRIDDYSCT). Intrachain disulfides connect C447-C460, C454-C469, C471-C483, C489-C502, C496-C511, C513-C524, C528-C538, C532-C544, and C546-C555. Ca(2+)-binding residues include N462, T463, and S466. The region spanning 485–525 (EHDECLTNQHNCDENALCFNTVGGHNCVCKPGYTGNGTTCK) is the EGF-like 3; calcium-binding domain. N520 carries an N-linked (GlcNAc...) asparagine glycan. In terms of domain architecture, EGF-like 4 spans 526–556 (AFCKDGCRNGGACIAANVCACPQGFTGPSCE). A glycan (O-linked (GlcNAc...) threonine) is linked at T551. D558, I559, and E561 together coordinate Ca(2+). Residues 558–604 (DIDECSEGFVQCDSRANCINLPGWYHCECRDGYHDNGMFAPGGESCE) form the EGF-like 5; calcium-binding domain. Intrachain disulfides connect C562/C575, C569/C584, and C586/C603. Ca(2+) contacts are provided by N577, L578, and W581. Residues D605, I606, and E608 each contribute to the Ca(2+) site. The region spanning 605–640 (DIDECGTGRHSCANDTICFNLDGGYDCRCPHGKNCT) is the EGF-like 6; calcium-binding domain. Cystine bridges form between C609-C622, C616-C631, and C633-C639. N618 is a glycosylation site (N-linked (GlcNAc...) asparagine). The Ca(2+) site is built by N624, L625, and G628. An N-linked (GlcNAc...) asparagine glycan is attached at N638. VWFC domains are found at residues 641–696 (GDCV…PECD) and 701–759 (SQCL…PRCV).

Homotrimer. Binds to PRKCB. Interacts with NICOL1; this interaction triggers epididymal differentiation. In terms of assembly, binds to PRKCB. Widely expressed. Expressed in cortical astrocytes but not in neuron. As to expression, widely expressed in brain. High expression is observed in telencephalic and diencephalic glutamatergic neurons, while no expression is found in GABAergic and GNRH neurons.

The protein resides in the secreted. The protein localises to the cytoplasm. Plays multiple roles In neural tissues, regulates neuronal proliferation, survival, differentiation, polarization, as well as axon guidance and synaptic functions. Plays an important role in axon development during neuronal differentiation through the MAPK intracellular signaling pathway. Via binding to its receptor ROBO3, plays a role in axon guidance, functioning as a repulsive axon guidance cue that contributes to commissural axon guidance to the midline. Required for neuron survival through the modulation of MAPK signaling pathways too. Involved in the regulation of hypothalamic GNRH secretion and the control of puberty. In terms of biological role, epididymal-secreted protein that signals through a ROS1-pathway to regulate the epididymal initial segment (IS) maturation, sperm maturation and male fertility. Its function is as follows. Acts as an endogenous inhibitor of PRKCB in glia. In Rattus norvegicus (Rat), this protein is Protein kinase C-binding protein NELL2 (Nell2).